The following is a 586-amino-acid chain: ATP-dependent lipid A-core flippase (586 aa).

The next 4 membrane-spanning stretches (helical) occupy residues 25 to 45, 74 to 94, 163 to 183, and 264 to 284; these read AYFI…AQLI, LWFV…GAYF, VAWF…AFIC, and VLHI…MILW. Residues 28–317 enclose the ABC transmembrane type-1 domain; the sequence is IISFIGFGVF…LTKINSIIQK (290 aa). The ABC transporter domain maps to 349 to 583; sequence VELKDVHFGY…SGVYANLYHS (235 aa). An ATP-binding site is contributed by 382 to 389; it reads GSSGSGKS.

Belongs to the ABC transporter superfamily. Lipid exporter (TC 3.A.1.106) family. Homodimer.

It is found in the cell inner membrane. It catalyses the reaction ATP + H2O + lipid A-core oligosaccharideSide 1 = ADP + phosphate + lipid A-core oligosaccharideSide 2.. Its function is as follows. Involved in lipopolysaccharide (LPS) biosynthesis. Translocates lipid A-core from the inner to the outer leaflet of the inner membrane. Transmembrane domains (TMD) form a pore in the inner membrane and the ATP-binding domain (NBD) is responsible for energy generation. This is ATP-dependent lipid A-core flippase from Saccharophagus degradans (strain 2-40 / ATCC 43961 / DSM 17024).